Here is a 261-residue protein sequence, read N- to C-terminus: 1-(5-phosphoribosyl)-5-[(5-phosphoribosylamino)methylideneamino] imidazole-4-carboxamide isomerase (261 aa).

This sequence belongs to the HisA/HisF family.

It is found in the cytoplasm. The enzyme catalyses 1-(5-phospho-beta-D-ribosyl)-5-[(5-phospho-beta-D-ribosylamino)methylideneamino]imidazole-4-carboxamide = 5-[(5-phospho-1-deoxy-D-ribulos-1-ylimino)methylamino]-1-(5-phospho-beta-D-ribosyl)imidazole-4-carboxamide. It functions in the pathway amino-acid biosynthesis; L-histidine biosynthesis; L-histidine from 5-phospho-alpha-D-ribose 1-diphosphate: step 4/9. Its function is as follows. Catalyzes the isomerization of the aminoaldose moiety of ProFAR to the aminoketose of PRFAR. The sequence is that of 1-(5-phosphoribosyl)-5-[(5-phosphoribosylamino)methylideneamino] imidazole-4-carboxamide isomerase from Saccharomyces cerevisiae (strain ATCC 204508 / S288c) (Baker's yeast).